The following is a 331-amino-acid chain: Ketol-acid reductoisomerase (NADP(+)) (331 aa).

Positions 2-182 (IKKYYDADCN…GAGRAGILET (181 aa)) constitute a KARI N-terminal Rossmann domain. NADP(+) is bound by residues 25-28 (YGSQ), Arg48, and Ser51. His108 is an active-site residue. Gly134 provides a ligand contact to NADP(+). One can recognise a KARI C-terminal knotted domain in the interval 183–329 (TFREETETDL…AELRKMMSWI (147 aa)). Residues Asp191, Glu195, Glu227, and Glu231 each coordinate Mg(2+). Residue Ser252 coordinates substrate.

It belongs to the ketol-acid reductoisomerase family. Mg(2+) serves as cofactor.

The catalysed reaction is (2R)-2,3-dihydroxy-3-methylbutanoate + NADP(+) = (2S)-2-acetolactate + NADPH + H(+). The enzyme catalyses (2R,3R)-2,3-dihydroxy-3-methylpentanoate + NADP(+) = (S)-2-ethyl-2-hydroxy-3-oxobutanoate + NADPH + H(+). It functions in the pathway amino-acid biosynthesis; L-isoleucine biosynthesis; L-isoleucine from 2-oxobutanoate: step 2/4. It participates in amino-acid biosynthesis; L-valine biosynthesis; L-valine from pyruvate: step 2/4. Functionally, involved in the biosynthesis of branched-chain amino acids (BCAA). Catalyzes an alkyl-migration followed by a ketol-acid reduction of (S)-2-acetolactate (S2AL) to yield (R)-2,3-dihydroxy-isovalerate. In the isomerase reaction, S2AL is rearranged via a Mg-dependent methyl migration to produce 3-hydroxy-3-methyl-2-ketobutyrate (HMKB). In the reductase reaction, this 2-ketoacid undergoes a metal-dependent reduction by NADPH to yield (R)-2,3-dihydroxy-isovalerate. This chain is Ketol-acid reductoisomerase (NADP(+)), found in Brachyspira hyodysenteriae (strain ATCC 49526 / WA1).